The chain runs to 225 residues: Putative amino-acid transporter YggA (225 aa).

The next 5 membrane-spanning stretches (helical) occupy residues 1–21 (MFAT…PIGA), 37–57 (LLTA…GVFG), 65–85 (SPIG…WFGI), 116–136 (LGVT…LGSF), and 150–170 (AVAM…AVVL).

Belongs to the LysE/ArgO transporter (TC 2.A.75) family.

The protein localises to the cell membrane. This chain is Putative amino-acid transporter YggA, found in Aeromonas hydrophila.